The primary structure comprises 37 residues: MVEALLSGIVLGLIPITLAGLFVTAYLQYRRGDQLDL.

Residues 5-25 (LLSGIVLGLIPITLAGLFVTA) traverse the membrane as a helical segment.

This sequence belongs to the PetG family. In terms of assembly, the 4 large subunits of the cytochrome b6-f complex are cytochrome b6, subunit IV (17 kDa polypeptide, PetD), cytochrome f and the Rieske protein, while the 4 small subunits are PetG, PetL, PetM and PetN. The complex functions as a dimer.

The protein localises to the plastid. The protein resides in the chloroplast thylakoid membrane. Its function is as follows. Component of the cytochrome b6-f complex, which mediates electron transfer between photosystem II (PSII) and photosystem I (PSI), cyclic electron flow around PSI, and state transitions. PetG is required for either the stability or assembly of the cytochrome b6-f complex. The chain is Cytochrome b6-f complex subunit 5 from Angiopteris evecta (Mule's foot fern).